A 216-amino-acid chain; its full sequence is Serine/threonine-protein phosphatase 1 (216 aa).

Mn(2+)-binding residues include Asp24, His26, Asp53, and Asn79. The active-site Proton donor is the His80. Residue His185 coordinates Mn(2+).

The protein belongs to the PPP phosphatase family. PP-1 subfamily. Requires Mn(2+) as cofactor.

The catalysed reaction is O-phospho-L-seryl-[protein] + H2O = L-seryl-[protein] + phosphate. The enzyme catalyses O-phospho-L-threonyl-[protein] + H2O = L-threonyl-[protein] + phosphate. With respect to regulation, inhibited by cadmium, copper, zinc when added cobalt when added concomitantly with manganese. Can hydrolyze phosphorylated Ser-, Thr- or Tyr-substrates in vitro. The natural substrate is unknown. The chain is Serine/threonine-protein phosphatase 1 (pphA) from Salmonella typhimurium (strain LT2 / SGSC1412 / ATCC 700720).